A 126-amino-acid polypeptide reads, in one-letter code: Large ribosomal subunit protein bL12 (126 aa).

The protein belongs to the bacterial ribosomal protein bL12 family. In terms of assembly, homodimer. Part of the ribosomal stalk of the 50S ribosomal subunit. Forms a multimeric L10(L12)X complex, where L10 forms an elongated spine to which 2 to 4 L12 dimers bind in a sequential fashion. Binds GTP-bound translation factors.

Its function is as follows. Forms part of the ribosomal stalk which helps the ribosome interact with GTP-bound translation factors. Is thus essential for accurate translation. This Chlorobaculum tepidum (strain ATCC 49652 / DSM 12025 / NBRC 103806 / TLS) (Chlorobium tepidum) protein is Large ribosomal subunit protein bL12.